A 543-amino-acid chain; its full sequence is CTP synthase (543 aa).

The amidoligase domain stretch occupies residues 1–267; sequence MKQTKYIFVT…LSPIAEILDL (267 aa). Residue Ser-15 participates in CTP binding. Ser-15 contacts UTP. ATP contacts are provided by residues 16-21 and Asp-73; that span reads SLGKGI. Mg(2+)-binding residues include Asp-73 and Glu-141. Residues 148 to 150, 188 to 193, and Lys-224 each bind CTP; these read DIE and KTKPTQ. UTP is bound by residues 188 to 193 and Lys-224; that span reads KTKPTQ. Residues 292-543 enclose the Glutamine amidotransferase type-1 domain; the sequence is KIAFVGKYVD…IKAAINYEDN (252 aa). Gly-354 provides a ligand contact to L-glutamine. Residue Cys-381 is the Nucleophile; for glutamine hydrolysis of the active site. Residues 382-385, Glu-405, and Arg-473 each bind L-glutamine; that span reads LGMQ. Active-site residues include His-516 and Glu-518.

The protein belongs to the CTP synthase family. Homotetramer.

The enzyme catalyses UTP + L-glutamine + ATP + H2O = CTP + L-glutamate + ADP + phosphate + 2 H(+). It catalyses the reaction L-glutamine + H2O = L-glutamate + NH4(+). The catalysed reaction is UTP + NH4(+) + ATP = CTP + ADP + phosphate + 2 H(+). It functions in the pathway pyrimidine metabolism; CTP biosynthesis via de novo pathway; CTP from UDP: step 2/2. Its activity is regulated as follows. Allosterically activated by GTP, when glutamine is the substrate; GTP has no effect on the reaction when ammonia is the substrate. The allosteric effector GTP functions by stabilizing the protein conformation that binds the tetrahedral intermediate(s) formed during glutamine hydrolysis. Inhibited by the product CTP, via allosteric rather than competitive inhibition. Catalyzes the ATP-dependent amination of UTP to CTP with either L-glutamine or ammonia as the source of nitrogen. Regulates intracellular CTP levels through interactions with the four ribonucleotide triphosphates. The protein is CTP synthase of Campylobacter jejuni subsp. jejuni serotype O:23/36 (strain 81-176).